We begin with the raw amino-acid sequence, 1129 residues long: Phytochrome A type 4 (1129 aa).

Low complexity predominate over residues 1–21 (MSSSRPASSSSSRNRQSSRAR). Residues 1 to 24 (MSSSRPASSSSSRNRQSSRARVLA) are disordered. A GAF domain is found at 217–402 (SMEVLCNTVV…VFAVHVNREF (186 aa)). Residue Cys322 coordinates phytochromobilin. PAS domains follow at residues 618–688 (VTSE…LQGK) and 748–822 (VEGD…VSLC). The 221-residue stretch at 902-1122 (YMRHAINNPL…TFILTAELAS (221 aa)) folds into the Histidine kinase domain.

The protein belongs to the phytochrome family. As to quaternary structure, homodimer. In terms of processing, contains one covalently linked phytochromobilin chromophore.

Functionally, regulatory photoreceptor which exists in two forms that are reversibly interconvertible by light: the Pr form that absorbs maximally in the red region of the spectrum and the Pfr form that absorbs maximally in the far-red region. Photoconversion of Pr to Pfr induces an array of morphogenic responses, whereas reconversion of Pfr to Pr cancels the induction of those responses. Pfr controls the expression of a number of nuclear genes including those encoding the small subunit of ribulose-bisphosphate carboxylase, chlorophyll A/B binding protein, protochlorophyllide reductase, rRNA, etc. It also controls the expression of its own gene(s) in a negative feedback fashion. This Avena sativa (Oat) protein is Phytochrome A type 4 (PHYA4).